Reading from the N-terminus, the 278-residue chain is S-formylglutathione hydrolase YeiG (278 aa).

Active-site charge relay system residues include Ser145, Asp223, and His256.

This sequence belongs to the esterase D family.

The enzyme catalyses S-formylglutathione + H2O = formate + glutathione + H(+). In terms of biological role, serine hydrolase involved in the detoxification of formaldehyde. Hydrolyzes S-formylglutathione to glutathione and formate. The chain is S-formylglutathione hydrolase YeiG (yeiG) from Escherichia coli O157:H7.